A 395-amino-acid polypeptide reads, in one-letter code: Glutamyl-tRNA reductase (395 aa).

Substrate contacts are provided by residues 45 to 48 (TCNR), Ser87, 92 to 94 (EDQ), and Gln98. The active-site Nucleophile is the Cys46. NADP(+) is bound at residue 167-172 (GAGEMG).

The protein belongs to the glutamyl-tRNA reductase family. As to quaternary structure, homodimer.

It catalyses the reaction (S)-4-amino-5-oxopentanoate + tRNA(Glu) + NADP(+) = L-glutamyl-tRNA(Glu) + NADPH + H(+). It participates in porphyrin-containing compound metabolism; protoporphyrin-IX biosynthesis; 5-aminolevulinate from L-glutamyl-tRNA(Glu): step 1/2. Its function is as follows. Catalyzes the NADPH-dependent reduction of glutamyl-tRNA(Glu) to glutamate 1-semialdehyde (GSA). This Methanosphaera stadtmanae (strain ATCC 43021 / DSM 3091 / JCM 11832 / MCB-3) protein is Glutamyl-tRNA reductase.